Reading from the N-terminus, the 656-residue chain is UvrABC system protein C (656 aa).

One can recognise a GIY-YIG domain in the interval 16-95 (TDPGVYRFRD…IKEYSPRFNV (80 aa)). Residues 208–243 (GRFLRQLEAEMKQAAAAQEYERAARIRDDIQALRTV) enclose the UVR domain.

It belongs to the UvrC family. As to quaternary structure, interacts with UvrB in an incision complex.

Its subcellular location is the cytoplasm. Its function is as follows. The UvrABC repair system catalyzes the recognition and processing of DNA lesions. UvrC both incises the 5' and 3' sides of the lesion. The N-terminal half is responsible for the 3' incision and the C-terminal half is responsible for the 5' incision. This chain is UvrABC system protein C, found in Thermobifida fusca (strain YX).